The following is a 900-amino-acid chain: Probable 2-oxoadipate dehydrogenase complex component E1 homolog (900 aa).

This sequence belongs to the alpha-ketoglutarate dehydrogenase family. Thiamine diphosphate serves as cofactor.

Its subcellular location is the mitochondrion. The catalysed reaction is N(6)-[(R)-lipoyl]-L-lysyl-[protein] + 2-oxoadipate + H(+) = N(6)-[(R)-S(8)-glutaryldihydrolipoyl]-L-lysyl-[protein] + CO2. Its function is as follows. 2-oxoadipate dehydrogenase (E1a) component of the 2-oxoadipate dehydrogenase complex (OADHC). Participates in the first step, rate limiting for the overall conversion of 2-oxoadipate (alpha-ketoadipate) to glutaryl-CoA and CO(2) catalyzed by the whole OADHC. Catalyzes the irreversible decarboxylation of 2-oxoadipate via the thiamine diphosphate (ThDP) cofactor and subsequent transfer of the decarboxylated acyl intermediate on an oxidized dihydrolipoyl group that is covalently amidated to the E2 enzyme (dihydrolipoyllysine-residue succinyltransferase or DLST). The sequence is that of Probable 2-oxoadipate dehydrogenase complex component E1 homolog (odhA) from Dictyostelium discoideum (Social amoeba).